The following is a 1021-amino-acid chain: Caspase recruitment domain-containing protein 10 (1021 aa).

Residues 1 to 24 form a disordered region; sequence MQGRADAGEADEEAGAGSGSEAEE. Serine 18 carries the phosphoserine modification. The region spanning 23-115 is the CARD domain; sequence EEDALWERIE…EHFTLLTGQE (93 aa). Residues 138–450 adopt a coiled-coil conformation; the sequence is TEVRRLREAR…LEAQLQRTQG (313 aa). 3 disordered regions span residues 475–544, 597–616, and 790–809; these read EFPS…MSDI, SPPAGLDPQDKSPDSMPGLG, and LVRPKPAGGTAGDSAEQLPA. 2 stretches are compositionally biased toward basic and acidic residues: residues 495 to 508 and 525 to 535; these read HTSEEATDSEKEIN and RQREEDPEPPK.

As to quaternary structure, CARD10 and BCL10 bind to each other by CARD-CARD interaction. They both participate in a complex with MALT1, where MALT1 binds to BCL10. Interacts with TMEM43; this interaction is essential for EGFR-mediated NF-kappa-B activation. In terms of tissue distribution, highly expressed in kidney, heart followed by brain, lung, liver, skeletal muscle and testis.

Scaffold protein that plays an important role in mediating the activation of NF-kappa-B via BCL10 or EGFR. The protein is Caspase recruitment domain-containing protein 10 (Card10) of Mus musculus (Mouse).